We begin with the raw amino-acid sequence, 447 residues long: Tubulin beta-2 chain (447 aa).

GTP is bound by residues Gln-11, Glu-69, Ser-138, Gly-142, Thr-143, Gly-144, Asn-204, and Asn-226. Glu-69 provides a ligand contact to Mg(2+). Residues Gln-426 to Val-447 are disordered. Residues Gly-429–Val-447 are compositionally biased toward acidic residues.

The protein belongs to the tubulin family. Dimer of alpha and beta chains. A typical microtubule is a hollow water-filled tube with an outer diameter of 25 nm and an inner diameter of 15 nM. Alpha-beta heterodimers associate head-to-tail to form protofilaments running lengthwise along the microtubule wall with the beta-tubulin subunit facing the microtubule plus end conferring a structural polarity. Microtubules usually have 13 protofilaments but different protofilament numbers can be found in some organisms and specialized cells. It depends on Mg(2+) as a cofactor.

The protein resides in the cytoplasm. The protein localises to the cytoskeleton. In terms of biological role, tubulin is the major constituent of microtubules, a cylinder consisting of laterally associated linear protofilaments composed of alpha- and beta-tubulin heterodimers. Microtubules grow by the addition of GTP-tubulin dimers to the microtubule end, where a stabilizing cap forms. Below the cap, tubulin dimers are in GDP-bound state, owing to GTPase activity of alpha-tubulin. The protein is Tubulin beta-2 chain (TUB2) of Colletotrichum graminicola (Maize anthracnose fungus).